Reading from the N-terminus, the 425-residue chain is Histidine--tRNA ligase (425 aa).

It belongs to the class-II aminoacyl-tRNA synthetase family. As to quaternary structure, homodimer.

It localises to the cytoplasm. It catalyses the reaction tRNA(His) + L-histidine + ATP = L-histidyl-tRNA(His) + AMP + diphosphate + H(+). The chain is Histidine--tRNA ligase from Chlorobium chlorochromatii (strain CaD3).